We begin with the raw amino-acid sequence, 124 residues long: Probable cytochrome b5 1 (124 aa).

Positions 3-79 (VKYFEPEEIV…LEEMYIGDLK (77 aa)) constitute a Cytochrome b5 heme-binding domain. Heme is bound by residues His38 and His62. A helical membrane pass occupies residues 100–120 (PPLPLLIALIVLPAIAVIVFV).

It belongs to the cytochrome b5 family.

It is found in the endoplasmic reticulum membrane. The protein resides in the microsome membrane. Its function is as follows. Membrane bound hemoprotein which function as an electron carrier for several membrane bound oxygenases. This chain is Probable cytochrome b5 1, found in Schizosaccharomyces pombe (strain 972 / ATCC 24843) (Fission yeast).